We begin with the raw amino-acid sequence, 684 residues long: Pseudohemocyanin-1 (684 aa).

An N-terminal signal peptide occupies residues 1–23 (SLVVAAAAASPYSGSHDFSGFQR). The tract at residues 7–32 (AAASPYSGSHDFSGFQRDEPDGVPTA) is disordered. Asn-100, Asn-193, Asn-230, and Asn-626 each carry an N-linked (GlcNAc...) asparagine glycan.

It belongs to the tyrosinase family. Hemocyanin subfamily. Hexamer. Strongly expressed in ovaries. Also expressed in heart. Not detected in hepatopancreas, gills, connective tissue or muscle.

Does not function as a hemocyanin. The protein is Pseudohemocyanin-1 of Homarus americanus (American lobster).